We begin with the raw amino-acid sequence, 363 residues long: Protein MAK32 (363 aa).

It to S.pombe SpAC4G8.14c.

Its function is as follows. Necessary for the structural stability of L-A double-stranded RNA-containing particles. Necessary for growth at 37 degrees Celsius as well as for maintenance of the killer plasmid. The sequence is that of Protein MAK32 (MAK32) from Saccharomyces cerevisiae (strain ATCC 204508 / S288c) (Baker's yeast).